The following is a 319-amino-acid chain: Phosphate acyltransferase (319 aa).

Belongs to the PlsX family. As to quaternary structure, homodimer. Probably interacts with PlsY.

The protein resides in the cytoplasm. The enzyme catalyses a fatty acyl-[ACP] + phosphate = an acyl phosphate + holo-[ACP]. The protein operates within lipid metabolism; phospholipid metabolism. Functionally, catalyzes the reversible formation of acyl-phosphate (acyl-PO(4)) from acyl-[acyl-carrier-protein] (acyl-ACP). This enzyme utilizes acyl-ACP as fatty acyl donor, but not acyl-CoA. This Chlamydia muridarum (strain MoPn / Nigg) protein is Phosphate acyltransferase.